We begin with the raw amino-acid sequence, 381 residues long: Cytochrome b (381 aa).

Transmembrane regions (helical) follow at residues 34–54 (FGSL…FLAM), 78–99 (WLIR…YFHI), 114–134 (WNIG…GYVL), and 179–199 (FFAF…IHIL). Residues His84 and His98 each coordinate heme b. Positions 183 and 197 each coordinate heme b. A ubiquinone is bound at residue His202. 4 consecutive transmembrane segments (helical) span residues 227–247 (YKDA…ALFL), 289–309 (LGGV…PFLH), 321–341 (LTQV…WIGG), and 348–368 (FILI…IAIP).

The protein belongs to the cytochrome b family. In terms of assembly, the cytochrome bc1 complex contains 3 respiratory subunits (MT-CYB, CYC1 and UQCRFS1), 2 core proteins (UQCRC1 and UQCRC2) and probably 6 low-molecular weight proteins. Heme b serves as cofactor.

It is found in the mitochondrion inner membrane. Component of the ubiquinol-cytochrome c reductase complex (complex III or cytochrome b-c1 complex) that is part of the mitochondrial respiratory chain. The b-c1 complex mediates electron transfer from ubiquinol to cytochrome c. Contributes to the generation of a proton gradient across the mitochondrial membrane that is then used for ATP synthesis. The polypeptide is Cytochrome b (mt-cyb) (Carcharodon carcharias (Great white shark)).